The sequence spans 107 residues: uncharacterized protein (107 aa).

A coiled-coil region spans residues 34-107 (FASKDKKDEK…SDNQKKDMSY (74 aa)).

This is an uncharacterized protein from Dictyostelium discoideum (Social amoeba).